Here is a 1331-residue protein sequence, read N- to C-terminus: NPC1-like intracellular cholesterol transporter 1 (1331 aa).

An N-terminal signal peptide occupies residues 1 to 20 (MAAAWLGWLLWALLLSAAQG). At 21–282 (ELYTPKHEAG…RPSFYMGRMP (262 aa)) the chain is on the extracellular side. 9 disulfide bridges follow: C32–C90, C38–C56, C77–C125, C91–C129, C113–C254, C116–C172, C189–C197, C243–C259, and C256–C263. N-linked (GlcNAc...) asparagine glycans are attached at residues N53 and N85. N138 is a glycosylation site (N-linked (GlcNAc...) asparagine). A glycan (N-linked (GlcNAc...) asparagine) is linked at N244. Residues 283-303 (GWLALIIIFTAVFVLLSAVLV) traverse the membrane as a helical segment. Over 304 to 352 (RLRVVSNRNKNKAEGPQEAPKLPHKHKLSPHTILGRFFQNWGTRVASWP) the chain is Cytoplasmic. A helical transmembrane segment spans residues 353–373 (LTVLALSFIVVIALAAGLTFI). The Extracellular portion of the chain corresponds to 374–632 (ELTTDPVELW…DEINRTTIQD (259 aa)). N416, N431, N464, N479, N497, and N506 each carry an N-linked (GlcNAc...) asparagine glycan. A disulfide bridge links C471 with C485. C525 and C542 are joined by a disulfide. N606 and N626 each carry an N-linked (GlcNAc...) asparagine glycan. Positions 632 to 797 (DLPVFAVSYI…MTAFVALLSL (166 aa)) constitute an SSD domain. The helical transmembrane segment at 633–653 (LPVFAVSYIIVFLYISLALGS) threads the bilayer. The Cytoplasmic portion of the chain corresponds to 654-665 (YSRCSRVAVESK). Residues 666 to 686 (ATLGLGGVIVVLGAVLAAMGF) traverse the membrane as a helical segment. The Extracellular portion of the chain corresponds to 687–696 (YSYLGVPSSL). The chain crosses the membrane as a helical span at residues 697 to 717 (VIIQVVPFLVLAVGADNIFIF). At 718-742 (VLEYQRLPRMPGEQREAHIGRTLGS) the chain is on the cytoplasmic side. Residues 743–763 (VAPSMLLCSLSEAICFFLGAL) traverse the membrane as a helical segment. Residues 764 to 776 (TPMPAVRTFALTS) lie on the Extracellular side of the membrane. Residues 777–797 (GLAIILDFLLQMTAFVALLSL) form a helical membrane-spanning segment. Residues 798–846 (DSKRQEASRPDVLCCFSTRKLPPPKEKEGLLLRFFRKIYAPFLLHRFIR) lie on the Cytoplasmic side of the membrane. The chain crosses the membrane as a helical span at residues 847–867 (PVVMLLFLTLFGANLYLMCNI). Residues 868–1113 (NVGLDQELAL…QQYLTVLPEG (246 aa)) lie on the Extracellular side of the membrane. 2 N-linked (GlcNAc...) asparagine glycosylation sites follow: N909 and N917. Disulfide bonds link C920–C925, C967–C1025, and C981–C990. N996, N1038, and N1076 each carry an N-linked (GlcNAc...) asparagine glycan. Residues 1114 to 1134 (IFTLALCFVPTFVVCYLLLGL) traverse the membrane as a helical segment. Topologically, residues 1135–1142 (DMCSGILN) are cytoplasmic. Residues 1143-1163 (LLSIIMILVDTIGLMAVWGIS) form a helical membrane-spanning segment. Residues 1164-1165 (YN) are Extracellular-facing. A helical membrane pass occupies residues 1166-1186 (AVSLINLVTAVGMSVEFVSHI). Topologically, residues 1187-1206 (TRSFAVSTKPTRLERAKDAT) are cytoplasmic. Residues 1207 to 1227 (VFMGSAVFAGVAMTNFPGILI) traverse the membrane as a helical segment. Topologically, residues 1228–1242 (LGFAQAQLIQIFFFR) are extracellular. The chain crosses the membrane as a helical span at residues 1243–1263 (LNLLITLLGLLHGLVFLPVVL). Over 1264-1331 (SYLGPDVNQA…SSLPKSDQKF (68 aa)) the chain is Cytoplasmic.

The protein belongs to the patched family. In terms of assembly, interacts with RAB11A, MYO5B and RAB11FIP2. Interaction with RAB11A, MYO5B and RAB11FIP2 is required for proper transport to the plasma membrane upon cholesterol depletion. Interacts with NPC2. Interacts with LIMA1. Highly glycosylated. As to expression, small intestine showed the highest level of expression. Expression in other tissues including gall bladder, liver, testis and stomach is also observed. Along the duodenum-ileum axis, the levels vary in different segments of the intestine with peak expression in the proximal jejunum. Protein expression is confined to the enterocyte. Discrete localization to the epithelial layer bordering the luminal space along the crypt-villus axis. Protein expression in the enterocyte is observed closest to the luminal space. Expression in enterocytes from the proximal (jejunum) but not in the distal (ileum) region.

The protein localises to the apical cell membrane. It is found in the cell membrane. The enzyme catalyses cholesterol(in) = cholesterol(out). The catalysed reaction is sitosterol(out) = sitosterol(in). Functionally, plays a major role in cholesterol homeostasis. Critical for the uptake of cholesterol across the plasma membrane of the intestinal enterocyte. Involved in plant sterol absorption, it transports sitosterol, although at lower rates than cholesterol. Is the direct molecular target of ezetimibe, a drug that inhibits cholesterol absorption and is approved for the treatment of hypercholesterolemia. May have a function in the transport of multiple lipids and their homeostasis, thereby influencing lipid metabolism regulation. May be involved in caveolin trafficking from the plasma membrane. Acts as a negative regulator of NPC2 and down-regulates its expression and secretion by inhibiting its maturation and accelerating its degradation. The protein is NPC1-like intracellular cholesterol transporter 1 of Rattus norvegicus (Rat).